The following is a 119-amino-acid chain: Ribonuclease P protein component (119 aa).

The protein belongs to the RnpA family. Consists of a catalytic RNA component (M1 or rnpB) and a protein subunit.

The catalysed reaction is Endonucleolytic cleavage of RNA, removing 5'-extranucleotides from tRNA precursor.. RNaseP catalyzes the removal of the 5'-leader sequence from pre-tRNA to produce the mature 5'-terminus. It can also cleave other RNA substrates such as 4.5S RNA. The protein component plays an auxiliary but essential role in vivo by binding to the 5'-leader sequence and broadening the substrate specificity of the ribozyme. The sequence is that of Ribonuclease P protein component from Aromatoleum aromaticum (strain DSM 19018 / LMG 30748 / EbN1) (Azoarcus sp. (strain EbN1)).